A 227-amino-acid polypeptide reads, in one-letter code: Endolytic peptidoglycan transglycosylase RlpA (227 aa).

The signal sequence occupies residues 1 to 21; sequence MMNHKFVLLILLIFYCFFLSG. Residue C22 is the site of N-palmitoyl cysteine attachment. The S-diacylglycerol cysteine moiety is linked to residue C22.

It belongs to the RlpA family.

The protein resides in the cell membrane. In terms of biological role, lytic transglycosylase with a strong preference for naked glycan strands that lack stem peptides. This Rickettsia bellii (strain RML369-C) protein is Endolytic peptidoglycan transglycosylase RlpA.